We begin with the raw amino-acid sequence, 195 residues long: 22.0 kDa heat shock protein (195 aa).

The N-terminal stretch at Met1–Thr21 is a signal peptide. The sHSP domain occupies Arg62–Glu180. N-linked (GlcNAc...) asparagine glycosylation is present at Asn160.

This sequence belongs to the small heat shock protein (HSP20) family. May form oligomeric structures.

It localises to the endoplasmic reticulum. This chain is 22.0 kDa heat shock protein (HSP22.0), found in Arabidopsis thaliana (Mouse-ear cress).